We begin with the raw amino-acid sequence, 385 residues long: Type III polyketide synthase C (385 aa).

CoA is bound at residue 56-63 (KLQHLCKS). Cys165 (nucleophile) is an active-site residue. 217–218 (GD) is a binding site for substrate. Residues Leu267, 307–310 (GGPA), and Ala310 each bind CoA.

This sequence belongs to the thiolase-like superfamily. Chalcone/stilbene synthases family. In terms of assembly, homodimer.

Its subcellular location is the endoplasmic reticulum. It participates in secondary metabolite biosynthesis; flavonoid biosynthesis. Its function is as follows. Plant type III polyketide synthases (PKSs) that catalyzes the condensation of malonyl-CoA units with various CoA ester starter molecules to generate a diverse array of natural products including long-chain alkyl alpha-pyrones. The polypeptide is Type III polyketide synthase C (Arabidopsis thaliana (Mouse-ear cress)).